Reading from the N-terminus, the 131-residue chain is MSWQAYVDDHLMCEIEGNHLSAAAIIGHDGSVWAQSATFPQLKPEEVTGILNDFNEPGSLAPTGLYLGGTKYMVIQGEPGAVIRGKKGPGGVTVKKSTLALLIGIYDEPMTPGQCNMIVERLGDYLVEQGL.

The protein belongs to the profilin family. In terms of assembly, occurs in many kinds of cells as a complex with monomeric actin in a 1:1 ratio.

It localises to the cytoplasm. It is found in the cytoskeleton. Its function is as follows. Binds to actin and affects the structure of the cytoskeleton. At high concentrations, profilin prevents the polymerization of actin, whereas it enhances it at low concentrations. By binding to PIP2, it inhibits the formation of IP3 and DG. The chain is Profilin from Prunus persica (Peach).